Consider the following 313-residue polypeptide: Acetaldehyde dehydrogenase (313 aa).

12–15 is an NAD(+) binding site; it reads SGNI. Cys132 serves as the catalytic Acyl-thioester intermediate. NAD(+)-binding positions include 163 to 171 and Asn291; that span reads SAGPGTRAN.

The protein belongs to the acetaldehyde dehydrogenase family.

It carries out the reaction acetaldehyde + NAD(+) + CoA = acetyl-CoA + NADH + H(+). In Burkholderia cepacia (Pseudomonas cepacia), this protein is Acetaldehyde dehydrogenase (bphG).